The primary structure comprises 236 residues: Eukaryotic translation initiation factor 3 subunit J (236 aa).

A disordered region spans residues 1 to 84 (MADDWESAAD…RLEEEAEAQR (84 aa)). Residues 28 to 46 (GEDEDEDIKDSWEDEEEKK) are compositionally biased toward acidic residues. Composition is skewed to basic and acidic residues over residues 47 to 58 (DEEKPTKTEAPA) and 68 to 77 (AKLEQQARLE).

It belongs to the eIF-3 subunit J family. As to quaternary structure, component of the eukaryotic translation initiation factor 3 (eIF-3) complex. The eIF-3 complex interacts with pix.

It is found in the cytoplasm. Its function is as follows. Component of the eukaryotic translation initiation factor 3 (eIF-3) complex, which is involved in protein synthesis of a specialized repertoire of mRNAs and, together with other initiation factors, stimulates binding of mRNA and methionyl-tRNAi to the 40S ribosome. The eIF-3 complex specifically targets and initiates translation of a subset of mRNAs involved in cell proliferation. The protein is Eukaryotic translation initiation factor 3 subunit J of Drosophila yakuba (Fruit fly).